Consider the following 204-residue polypeptide: Peptidyl-tRNA hydrolase (204 aa).

Residue Tyr19 coordinates tRNA. His24 acts as the Proton acceptor in catalysis. Tyr70, Asn72, and Asn118 together coordinate tRNA.

The protein belongs to the PTH family. Monomer.

It is found in the cytoplasm. The catalysed reaction is an N-acyl-L-alpha-aminoacyl-tRNA + H2O = an N-acyl-L-amino acid + a tRNA + H(+). Its function is as follows. Hydrolyzes ribosome-free peptidyl-tRNAs (with 1 or more amino acids incorporated), which drop off the ribosome during protein synthesis, or as a result of ribosome stalling. Functionally, catalyzes the release of premature peptidyl moieties from peptidyl-tRNA molecules trapped in stalled 50S ribosomal subunits, and thus maintains levels of free tRNAs and 50S ribosomes. This chain is Peptidyl-tRNA hydrolase, found in Prochlorococcus marinus (strain SARG / CCMP1375 / SS120).